The chain runs to 196 residues: GTP cyclohydrolase-2 (196 aa).

49–53 (RIHSE) provides a ligand contact to GTP. 3 residues coordinate Zn(2+): Cys-54, Cys-65, and Cys-67. Residues Gln-70, 92–94 (EGR), and Thr-114 each bind GTP. Asp-126 functions as the Proton acceptor in the catalytic mechanism. The active-site Nucleophile is the Arg-128. GTP contacts are provided by Thr-149 and Lys-154.

This sequence belongs to the GTP cyclohydrolase II family. Homodimer. Requires Zn(2+) as cofactor.

The enzyme catalyses GTP + 4 H2O = 2,5-diamino-6-hydroxy-4-(5-phosphoribosylamino)-pyrimidine + formate + 2 phosphate + 3 H(+). It functions in the pathway cofactor biosynthesis; riboflavin biosynthesis; 5-amino-6-(D-ribitylamino)uracil from GTP: step 1/4. Its function is as follows. Catalyzes the conversion of GTP to 2,5-diamino-6-ribosylamino-4(3H)-pyrimidinone 5'-phosphate (DARP), formate and pyrophosphate. The polypeptide is GTP cyclohydrolase-2 (Buchnera aphidicola subsp. Schizaphis graminum (strain Sg)).